The chain runs to 294 residues: Putative inactive magnesium transporter MRS2-8 (294 aa).

The stretch at 179–216 (KLKSSMTRLTAQVQKIKDELEQLLEDDEDMAELYLSRK) forms a coiled coil.

This sequence belongs to the CorA metal ion transporter (MIT) (TC 1.A.35.5) family.

The chain is Putative inactive magnesium transporter MRS2-8 (MRS2-8) from Arabidopsis thaliana (Mouse-ear cress).